The following is a 498-amino-acid chain: MSGYILAIDQGTTSTRSMLFDRNMRVVGLGQQEFTQHFPSSGWVEHDAEEIWKSVQSTIRIALAQAGISAADVAAIGITNQRETTVVWDRISGKPVHRAIVWQDRRTAQFCDELKRRNLEPLFTEKTGLLLDPYFSGTKLAWLLNHVPGLRERAQKGQVCFGTIDSWLIYKLTGGKAHVTDATNASRTLIYHIGENRWDDELLDILGIPAAMLPEVKDCAADFGMTDPALFGVSIPILGVAGDQQAAVIGNACFEPGMMKSTYGTGCFALLNTGTDRVTSSNRLLTTIAYRLDGVTTYALEGSIFIAGAAVQWLRDEMGFISVASEVSALAEKADPNQRIYLVPAFTGLGAPYWDAEARGAIFGLTRGTGRAEFARAALESVAYQTFDLLEAMQGDWKGATNHTVLRVDGGMVASDWTMQRLADILNAPVDRPVFLETTVLGAAWLAASRAGIWPDRKGFSERWQRDCRFEPAMPEKERESAIAGWRDSVSRCLTRPQ.

Threonine 12 contributes to the ADP binding site. Threonine 12, threonine 13, and serine 14 together coordinate ATP. Threonine 12 serves as a coordination point for sn-glycerol 3-phosphate. Arginine 16 serves as a coordination point for ADP. Sn-glycerol 3-phosphate contacts are provided by arginine 82, glutamate 83, tyrosine 134, and aspartate 243. Residues arginine 82, glutamate 83, tyrosine 134, aspartate 243, and glutamine 244 each contribute to the glycerol site. ADP is bound by residues threonine 265 and glycine 308. Positions 265, 308, 312, and 411 each coordinate ATP. An ADP-binding site is contributed by glycine 411.

This sequence belongs to the FGGY kinase family.

It catalyses the reaction glycerol + ATP = sn-glycerol 3-phosphate + ADP + H(+). The protein operates within polyol metabolism; glycerol degradation via glycerol kinase pathway; sn-glycerol 3-phosphate from glycerol: step 1/1. With respect to regulation, inhibited by fructose 1,6-bisphosphate (FBP). Functionally, key enzyme in the regulation of glycerol uptake and metabolism. Catalyzes the phosphorylation of glycerol to yield sn-glycerol 3-phosphate. The sequence is that of Glycerol kinase from Brucella canis (strain ATCC 23365 / NCTC 10854 / RM-666).